The sequence spans 397 residues: Galactokinase (397 aa).

The tract at residues Met1–Arg27 is disordered. The segment covering Ser9–Gly18 has biased composition (low complexity). A substrate-binding site is contributed by Glu36–Asp39. ATP contacts are provided by residues Ser69 and Gly124–Ser130. Mg(2+)-binding residues include Ser130 and Glu161. The Proton acceptor role is filled by Asp173. Tyr225 contributes to the substrate binding site.

Belongs to the GHMP kinase family. GalK subfamily.

It localises to the cytoplasm. The enzyme catalyses alpha-D-galactose + ATP = alpha-D-galactose 1-phosphate + ADP + H(+). It participates in carbohydrate metabolism; galactose metabolism. In terms of biological role, catalyzes the transfer of the gamma-phosphate of ATP to D-galactose to form alpha-D-galactose-1-phosphate (Gal-1-P). In Streptomyces lividans, this protein is Galactokinase.